The following is a 475-amino-acid chain: Arginine/ornithine antiporter (475 aa).

12 helical membrane-spanning segments follow: residues 10 to 30, 42 to 62, 74 to 94, 101 to 121, 157 to 177, 205 to 225, 238 to 258, 283 to 303, 333 to 353, 361 to 381, 397 to 417, and 451 to 471; these read IGLL…GVFG, GPVL…ALSL, GIFS…SGWG, LGNV…FPIF, LVTI…IVLF, NCMM…MLSA, ILGL…PYGY, WGGY…WLSW, PTFA…TLLF, AYSL…AYQI, LLIG…AGVS, and WLIT…VVSG.

This sequence belongs to the amino acid-polyamine-organocation (APC) superfamily. Basic amino acid/polyamine antiporter (APA) (TC 2.A.3.2) family.

The protein resides in the cell membrane. The enzyme catalyses L-ornithine(in) + L-arginine(out) = L-ornithine(out) + L-arginine(in). Catalyzes electroneutral exchange between L-arginine and L-ornithine. This Latilactobacillus sakei (Lactobacillus sakei) protein is Arginine/ornithine antiporter (arcD).